The chain runs to 315 residues: Zinc metalloproteinase nas-4 (315 aa).

The first 20 residues, 1–20 (MMTIQRYSLVFCAIFATCWT), serve as a signal peptide directing secretion. N-linked (GlcNAc...) asparagine glycosylation occurs at Asn-71. In terms of domain architecture, Peptidase M12A spans 95 to 290 (NAIKQIYRRW…RKINKLYNCP (196 aa)). 2 cysteine pairs are disulfide-bonded: Cys-137–Cys-289 and Cys-160–Cys-179. His-187 is a binding site for Zn(2+). Glu-188 is a catalytic residue. Zn(2+)-binding residues include His-191 and His-197. Residues 291–315 (GVSGNNNNNNNNQINSNSIVNHPQV) form a disordered region.

Requires Zn(2+) as cofactor. Digestive tract. Found in the pharynx cells of the procorpus, metacorpus, isthmus and terminal bulb, and in the terminal bulb lumen.

Its subcellular location is the secreted. Its function is as follows. Metalloprotease. May be involved in digestion. The polypeptide is Zinc metalloproteinase nas-4 (nas-4) (Caenorhabditis elegans).